Here is a 322-residue protein sequence, read N- to C-terminus: Malate dehydrogenase (322 aa).

Residues glycine 10–glycine 15 and aspartate 34 each bind NAD(+). 2 residues coordinate substrate: arginine 83 and arginine 89. NAD(+) is bound by residues asparagine 96 and isoleucine 119–asparagine 121. Residues asparagine 121 and arginine 152 each contribute to the substrate site. Histidine 176 functions as the Proton acceptor in the catalytic mechanism.

The protein belongs to the LDH/MDH superfamily. MDH type 3 family.

The catalysed reaction is (S)-malate + NAD(+) = oxaloacetate + NADH + H(+). Functionally, catalyzes the reversible oxidation of malate to oxaloacetate. This chain is Malate dehydrogenase, found in Bradyrhizobium sp. (strain BTAi1 / ATCC BAA-1182).